Reading from the N-terminus, the 293-residue chain is Nucleotide-binding protein CKR_3143 (293 aa).

8–15 (GLSGAGKT) provides a ligand contact to ATP. 59 to 62 (DIRG) serves as a coordination point for GTP.

This sequence belongs to the RapZ-like family.

In terms of biological role, displays ATPase and GTPase activities. This is Nucleotide-binding protein CKR_3143 from Clostridium kluyveri (strain NBRC 12016).